We begin with the raw amino-acid sequence, 390 residues long: MKLFYFFLLSFLSSYIIAFSFKSTQSAHFILSVGRCNENYGNNIKKNRLYSTNNDHLKLLKYVREVTNASIQLCNKALKECNNDVDKAIEHVRKNTKSSTFVSTNIKVKKEGLVASQIKDDKIVLLELLTDSDFVARNKMFVQFVYSLLNVTLDNDLSVGNCKNAGDNKNSEDGYTTSGNILSNNNIMDEILSLPYVDEENKSNSTMREQLNYLRNIFREDIKIGRFSKYSKKNPNEFLHYYIHNKLDDHVGLSGVLLVLHINNLDEILKTKKEDIVNFANDLSMHIISAKPASVSIDTLNPKITKKEMDIIRDGLKDMKKPENILNNMIQGKMKKFYSSIVFLEQEYMLDETKRKVSQVIKDFGKDHNINISVNHFNYFAIGEKNVLME.

Belongs to the EF-Ts family.

It is found in the mitochondrion. Associates with the EF-Tu.GDP complex and induces the exchange of GDP to GTP. It remains bound to the aminoacyl-tRNA.EF-Tu.GTP complex up to the GTP hydrolysis stage on the ribosome. This is Elongation factor Ts, mitochondrial from Plasmodium falciparum (isolate 3D7).